The chain runs to 81 residues: Cortexin-3 (81 aa).

Residues 29-49 (MTFVFVILLFIFLGILIVRCF) form a helical membrane-spanning segment.

Belongs to the cortexin family.

It is found in the membrane. This chain is Cortexin-3 (CTXN3), found in Homo sapiens (Human).